We begin with the raw amino-acid sequence, 209 residues long: ATP synthase subunit b', chloroplastic (209 aa).

Residues 1–62 (MASLLARPQQ…NALMAMPAAA (62 aa)) constitute a chloroplast transit peptide. Residues 67–87 (IFDFNLTLPVMAGEFLLLMVF) traverse the membrane as a helical segment.

The protein belongs to the ATPase B chain family. F-type ATPases have 2 components, F(1) - the catalytic core - and F(0) - the membrane proton channel. F(1) has five subunits: alpha(3), beta(3), gamma(1), delta(1), epsilon(1). F(0) has four main subunits: a(1), b(1), b'(1) and c(10-14). The alpha and beta chains form an alternating ring which encloses part of the gamma chain. F(1) is attached to F(0) by a central stalk formed by the gamma and epsilon chains, while a peripheral stalk is formed by the delta, b and b' chains.

The protein localises to the plastid. Its subcellular location is the chloroplast thylakoid membrane. Its function is as follows. F(1)F(0) ATP synthase produces ATP from ADP in the presence of a proton or sodium gradient. F-type ATPases consist of two structural domains, F(1) containing the extramembraneous catalytic core and F(0) containing the membrane proton channel, linked together by a central stalk and a peripheral stalk. During catalysis, ATP synthesis in the catalytic domain of F(1) is coupled via a rotary mechanism of the central stalk subunits to proton translocation. Component of the F(0) channel, it forms part of the peripheral stalk, linking F(1) to F(0). The b'-subunit is a diverged and duplicated form of b found in plants and photosynthetic bacteria. This chain is ATP synthase subunit b', chloroplastic, found in Chlamydomonas reinhardtii (Chlamydomonas smithii).